Here is a 347-residue protein sequence, read N- to C-terminus: Magnesium-protoporphyrin IX monomethyl ester [oxidative] cyclase (347 aa).

It belongs to the AcsF family. Fe cation serves as cofactor.

It catalyses the reaction Mg-protoporphyrin IX 13-monomethyl ester + 3 NADPH + 3 O2 + 2 H(+) = 3,8-divinyl protochlorophyllide a + 3 NADP(+) + 5 H2O. The protein operates within porphyrin-containing compound metabolism; chlorophyll biosynthesis (light-independent). In terms of biological role, catalyzes the formation of the isocyclic ring in chlorophyll biosynthesis. Mediates the cyclase reaction, which results in the formation of divinylprotochlorophyllide (Pchlide) characteristic of all chlorophylls from magnesium-protoporphyrin IX 13-monomethyl ester (MgPMME). The sequence is that of Magnesium-protoporphyrin IX monomethyl ester [oxidative] cyclase from Prochlorococcus marinus (strain SARG / CCMP1375 / SS120).